Reading from the N-terminus, the 343-residue chain is Shematrin-like protein 3 (343 aa).

The first 16 residues, 1 to 16, serve as a signal peptide directing secretion; sequence MLKLVCAVVLIATVNA.

Prismatic layer of shell (at protein level).

Its subcellular location is the secreted. This Pinctada maxima (Silver-lipped pearl oyster) protein is Shematrin-like protein 3.